The following is a 501-amino-acid chain: Aldehyde dehydrogenase, cytosolic 1 (501 aa).

Ser2 is modified (N-acetylserine). N6-acetyllysine occurs at positions 91 and 128. 246–251 (GSTEVG) is an NAD(+) binding site. An N6-acetyllysine modification is found at Lys252. Residue Glu269 is the Proton acceptor of the active site. Cys303 (nucleophile) is an active-site residue. N6-acetyllysine is present on residues Lys353, Lys367, and Lys410. A Phosphoserine modification is found at Ser413. Residues Lys419, Lys435, and Lys495 each carry the N6-acetyllysine modification.

This sequence belongs to the aldehyde dehydrogenase family. In terms of assembly, homotetramer. In terms of tissue distribution, very low levels in lung and liver.

Its subcellular location is the cytoplasm. It carries out the reaction an aldehyde + NAD(+) + H2O = a carboxylate + NADH + 2 H(+). It participates in alcohol metabolism; ethanol degradation; acetate from ethanol: step 2/2. Can oxidize benzaldehyde, propionaldehyde and acetaldehyde. No detectable activity with retinal. This chain is Aldehyde dehydrogenase, cytosolic 1 (Aldh1a7), found in Rattus norvegicus (Rat).